Here is a 142-residue protein sequence, read N- to C-terminus: MAKKVQAYVKLQVAAGMANPSPPVGPALGQQGVNIMEFCKAFNAKTDSIEKGLPIPVVITVYSDRSFTFVTKTPPAAVLLKKAAGIKSGSGKPNKDKVGKVTSAQIREIAETKAADMTGASVDAMMRSIEGTARSMGLVVEG.

Belongs to the universal ribosomal protein uL11 family. In terms of assembly, part of the ribosomal stalk of the 50S ribosomal subunit. Interacts with L10 and the large rRNA to form the base of the stalk. L10 forms an elongated spine to which L12 dimers bind in a sequential fashion forming a multimeric L10(L12)X complex. In terms of processing, one or more lysine residues are methylated.

Functionally, forms part of the ribosomal stalk which helps the ribosome interact with GTP-bound translation factors. This chain is Large ribosomal subunit protein uL11, found in Photorhabdus laumondii subsp. laumondii (strain DSM 15139 / CIP 105565 / TT01) (Photorhabdus luminescens subsp. laumondii).